A 509-amino-acid chain; its full sequence is Bifunctional purine biosynthesis protein PurH (509 aa).

The MGS-like domain occupies 1-146 (MTIQKINRVL…KNWYRVGVCV (146 aa)).

It belongs to the PurH family.

The catalysed reaction is (6R)-10-formyltetrahydrofolate + 5-amino-1-(5-phospho-beta-D-ribosyl)imidazole-4-carboxamide = 5-formamido-1-(5-phospho-D-ribosyl)imidazole-4-carboxamide + (6S)-5,6,7,8-tetrahydrofolate. It carries out the reaction IMP + H2O = 5-formamido-1-(5-phospho-D-ribosyl)imidazole-4-carboxamide. The protein operates within purine metabolism; IMP biosynthesis via de novo pathway; 5-formamido-1-(5-phospho-D-ribosyl)imidazole-4-carboxamide from 5-amino-1-(5-phospho-D-ribosyl)imidazole-4-carboxamide (10-formyl THF route): step 1/1. It functions in the pathway purine metabolism; IMP biosynthesis via de novo pathway; IMP from 5-formamido-1-(5-phospho-D-ribosyl)imidazole-4-carboxamide: step 1/1. The protein is Bifunctional purine biosynthesis protein PurH of Natranaerobius thermophilus (strain ATCC BAA-1301 / DSM 18059 / JW/NM-WN-LF).